We begin with the raw amino-acid sequence, 652 residues long: Translation factor guf1, mitochondrial (652 aa).

Residues 1–44 (MSIFRLSRTFSLETCLKSSSFKIRWRFFSVSYASRKLASEDNKP) constitute a mitochondrion transit peptide. A tr-type G domain is found at 56–237 (NRVRNWAVIA…EIIQKIPPPK (182 aa)). Residues 65 to 72 (AHIDHGKS), 130 to 134 (DTPGH), and 184 to 187 (NKVD) contribute to the GTP site.

Belongs to the TRAFAC class translation factor GTPase superfamily. Classic translation factor GTPase family. LepA subfamily.

It is found in the mitochondrion inner membrane. The enzyme catalyses GTP + H2O = GDP + phosphate + H(+). In terms of biological role, promotes mitochondrial protein synthesis. May act as a fidelity factor of the translation reaction, by catalyzing a one-codon backward translocation of tRNAs on improperly translocated ribosomes. Binds to mitochondrial ribosomes in a GTP-dependent manner. This chain is Translation factor guf1, mitochondrial (guf1), found in Schizosaccharomyces pombe (strain 972 / ATCC 24843) (Fission yeast).